The sequence spans 519 residues: Cytochrome P450 52A12 (519 aa).

Cys467 is a binding site for heme.

This sequence belongs to the cytochrome P450 family. Heme serves as cofactor.

Its subcellular location is the membrane. In terms of biological role, together with an NADPH cytochrome P450 the enzyme system catalyzes the terminal hydroxylation as the first step in the assimilation of alkanes and fatty acids. This chain is Cytochrome P450 52A12 (CYP52A12), found in Debaryomyces hansenii (Yeast).